The chain runs to 431 residues: MSIDLNWETLTTGPDGIALAEKIRDFVHAKFQTVTLPRFIKGVKVHTFDFGSIAPEVELKDICDPLPDFYEDLDDDDGGSDEDDEGSNSCQTDEENEAAKTLRERRKMDRVERTANGSSNVSNPPSYTDTRYPGLRSMQASGDNGSPFLGVSTPGIPGGTSNLSYFHSQLASGFSGTQTPLAAVAGAHLPQGWPDRPSPSLHMSALRNQSHTSLSHTASERPMTPPQIADLSQQSIREKASASTLAVSSSTTGPVTRGGATEKTIPEEQTSEGEEPTSPPRRFREPKPEDLQTVFRVRYSGNIRLSLTVDILLDYPMPSFVGIPVRLNITGLSFDGVAVLAYIRKRAHFCFLSPEDAYAAIGADEKEAGGSGGMKMGALLHEIKVESEIGQRENGKQVLKNVGKVEKFVLEQVRRIFEDEFVYPSFWTFLV.

One can recognise an SMP-LTD domain in the interval Met-1–Val-431. 2 disordered regions span residues Asp-68–Thr-153 and Gln-209–Glu-289. The segment covering Phe-69–Asn-96 has biased composition (acidic residues). Over residues Glu-97–Arg-113 the composition is skewed to basic and acidic residues. Polar residues predominate over residues Ala-115–Asp-129. Over residues Ser-241–Thr-252 the composition is skewed to low complexity.

It belongs to the MDM12 family. In terms of assembly, component of the ER-mitochondria encounter structure (ERMES) or MDM complex, composed of mmm1, mdm10, mdm12 and mdm34. A mmm1 homodimer associates with one molecule of mdm12 on each side in a pairwise head-to-tail manner, and the SMP-LTD domains of mmm1 and mdm12 generate a continuous hydrophobic tunnel for phospholipid trafficking.

The protein resides in the mitochondrion outer membrane. The protein localises to the endoplasmic reticulum membrane. In terms of biological role, component of the ERMES/MDM complex, which serves as a molecular tether to connect the endoplasmic reticulum (ER) and mitochondria. Components of this complex are involved in the control of mitochondrial shape and protein biogenesis, and function in nonvesicular lipid trafficking between the ER and mitochondria. Mdm12 is required for the interaction of the ER-resident membrane protein mmm1 and the outer mitochondrial membrane-resident beta-barrel protein mdm10. The mdm12-mmm1 subcomplex functions in the major beta-barrel assembly pathway that is responsible for biogenesis of all mitochondrial outer membrane beta-barrel proteins, and acts in a late step after the SAM complex. The mdm10-mdm12-mmm1 subcomplex further acts in the TOM40-specific pathway after the action of the mdm12-mmm1 complex. Essential for establishing and maintaining the structure of mitochondria and maintenance of mtDNA nucleoids. This chain is Mitochondrial distribution and morphology protein 12, found in Sclerotinia sclerotiorum (strain ATCC 18683 / 1980 / Ss-1) (White mold).